Consider the following 148-residue polypeptide: SsrA-binding protein (148 aa).

The protein belongs to the SmpB family.

The protein localises to the cytoplasm. In terms of biological role, required for rescue of stalled ribosomes mediated by trans-translation. Binds to transfer-messenger RNA (tmRNA), required for stable association of tmRNA with ribosomes. tmRNA and SmpB together mimic tRNA shape, replacing the anticodon stem-loop with SmpB. tmRNA is encoded by the ssrA gene; the 2 termini fold to resemble tRNA(Ala) and it encodes a 'tag peptide', a short internal open reading frame. During trans-translation Ala-aminoacylated tmRNA acts like a tRNA, entering the A-site of stalled ribosomes, displacing the stalled mRNA. The ribosome then switches to translate the ORF on the tmRNA; the nascent peptide is terminated with the 'tag peptide' encoded by the tmRNA and targeted for degradation. The ribosome is freed to recommence translation, which seems to be the essential function of trans-translation. In Ehrlichia canis (strain Jake), this protein is SsrA-binding protein.